We begin with the raw amino-acid sequence, 95 residues long: Putative septation protein SpoVG (95 aa).

It belongs to the SpoVG family.

Functionally, could be involved in septation. This is Putative septation protein SpoVG from Clostridium botulinum (strain ATCC 19397 / Type A).